The sequence spans 273 residues: Shikimate dehydrogenase (NADP(+)) (273 aa).

Shikimate-binding positions include 18-20 (SKS) and threonine 65. Catalysis depends on lysine 69, which acts as the Proton acceptor. Position 81 (glutamate 81) interacts with NADP(+). Residues asparagine 90 and aspartate 105 each contribute to the shikimate site. NADP(+)-binding positions include 130 to 134 (GAGGA), 154 to 159 (NRTHSK), and methionine 217. Tyrosine 219 is a binding site for shikimate. An NADP(+)-binding site is contributed by glycine 240.

Belongs to the shikimate dehydrogenase family. Homodimer.

The catalysed reaction is shikimate + NADP(+) = 3-dehydroshikimate + NADPH + H(+). Its pathway is metabolic intermediate biosynthesis; chorismate biosynthesis; chorismate from D-erythrose 4-phosphate and phosphoenolpyruvate: step 4/7. Functionally, involved in the biosynthesis of the chorismate, which leads to the biosynthesis of aromatic amino acids. Catalyzes the reversible NADPH linked reduction of 3-dehydroshikimate (DHSA) to yield shikimate (SA). The sequence is that of Shikimate dehydrogenase (NADP(+)) from Herminiimonas arsenicoxydans.